The chain runs to 317 residues: N-acetylmuramoyl-L-alanine amidase XlyB (317 aa).

A signal peptide spans 1–39 (MSIPVKKNLVSEAKYALKCPNAMSAEYITIHNTANDASA). The 103-residue stretch at 40–142 (ANEISYMIGN…QDWSGKYCPH (103 aa)) folds into the N-acetylmuramoyl-L-alanine amidase domain. A LysM domain is found at 177–221 (SEYHVKKGDTLSGIAASHGASVKTLQSINHITDPNHIKIGQVIKL).

Belongs to the N-acetylmuramoyl-L-alanine amidase 2 family.

It is found in the secreted. It catalyses the reaction Hydrolyzes the link between N-acetylmuramoyl residues and L-amino acid residues in certain cell-wall glycopeptides.. Autolysins are involved in some important biological processes such as cell separation, cell-wall turnover, competence for genetic transformation, formation of the flagella and sporulation. The chain is N-acetylmuramoyl-L-alanine amidase XlyB (xlyB) from Bacillus subtilis (strain 168).